Consider the following 208-residue polypeptide: Protein-L-isoaspartate O-methyltransferase (208 aa).

Residue S59 is part of the active site.

It belongs to the methyltransferase superfamily. L-isoaspartyl/D-aspartyl protein methyltransferase family.

The protein resides in the cytoplasm. The enzyme catalyses [protein]-L-isoaspartate + S-adenosyl-L-methionine = [protein]-L-isoaspartate alpha-methyl ester + S-adenosyl-L-homocysteine. Its function is as follows. Catalyzes the methyl esterification of L-isoaspartyl residues in peptides and proteins that result from spontaneous decomposition of normal L-aspartyl and L-asparaginyl residues. It plays a role in the repair and/or degradation of damaged proteins. The protein is Protein-L-isoaspartate O-methyltransferase of Escherichia coli O1:K1 / APEC.